Here is a 339-residue protein sequence, read N- to C-terminus: Glycerol-3-phosphate dehydrogenase [NAD(P)+] (339 aa).

Residues Ser13, Trp14, and Lys108 each coordinate NADPH. 3 residues coordinate sn-glycerol 3-phosphate: Lys108, Gly139, and Ser141. Ala143 is a binding site for NADPH. Sn-glycerol 3-phosphate-binding residues include Lys194, Asp247, Ser257, Arg258, and Asn259. The Proton acceptor role is filled by Lys194. Residue Arg258 participates in NADPH binding. NADPH-binding residues include Val282 and Glu284.

This sequence belongs to the NAD-dependent glycerol-3-phosphate dehydrogenase family.

It is found in the cytoplasm. It carries out the reaction sn-glycerol 3-phosphate + NAD(+) = dihydroxyacetone phosphate + NADH + H(+). The enzyme catalyses sn-glycerol 3-phosphate + NADP(+) = dihydroxyacetone phosphate + NADPH + H(+). The protein operates within membrane lipid metabolism; glycerophospholipid metabolism. Its function is as follows. Catalyzes the reduction of the glycolytic intermediate dihydroxyacetone phosphate (DHAP) to sn-glycerol 3-phosphate (G3P), the key precursor for phospholipid synthesis. This Streptococcus equi subsp. zooepidemicus (strain H70) protein is Glycerol-3-phosphate dehydrogenase [NAD(P)+].